Here is a 147-residue protein sequence, read N- to C-terminus: Putative toxin MJ0142 (147 aa).

Belongs to the UPF0332 family.

In terms of biological role, putative toxin component of a putative type VII toxin-antitoxin (TA) system. Its cognate antitoxin might be MJ0141. This chain is Putative toxin MJ0142, found in Methanocaldococcus jannaschii (strain ATCC 43067 / DSM 2661 / JAL-1 / JCM 10045 / NBRC 100440) (Methanococcus jannaschii).